Here is a 563-residue protein sequence, read N- to C-terminus: Arginine--tRNA ligase (563 aa).

Belongs to the class-I aminoacyl-tRNA synthetase family. Monomer.

It catalyses the reaction tRNA(Arg) + L-arginine + ATP = L-arginyl-tRNA(Arg) + AMP + diphosphate. This chain is Arginine--tRNA ligase, found in Encephalitozoon cuniculi (strain GB-M1) (Microsporidian parasite).